Here is a 63-residue protein sequence, read N- to C-terminus: Large ribosomal subunit protein uL29 (63 aa).

The protein belongs to the universal ribosomal protein uL29 family.

This is Large ribosomal subunit protein uL29 from Salmonella agona (strain SL483).